The sequence spans 298 residues: MMKNLDQNFDAILITGPTASGKSALALRLARERNGVVINADSMQVYDTLRVLTARPSDHEMEGVPHRLYGHVPAGSAYSTGEWLRDISGLLSDLRGEGRFPVIVGGTGLYFKALTGGLSDMPAIPDDLREGLRARLIEEGAAKLHAELVSRDPSMAQMLQPGDGQRIVRALEVLEATGKSIRDFQRASGPMIIDPERAQKFIVLPERPVLHDRINRRFEAMMDSGAVEEVQALLALNLAPDATAMKAIGVAQIADMLTGRMGAAEVIEKSAAATRQYAKRQMTWFRNQMGDDWTRIQP.

ATP is bound at residue 16–23 (GPTASGKS). 18 to 23 (TASGKS) lines the substrate pocket. 2 interaction with substrate tRNA regions span residues 41-44 (DSMQ) and 165-169 (QRIVR).

It belongs to the IPP transferase family. Monomer. It depends on Mg(2+) as a cofactor.

It carries out the reaction adenosine(37) in tRNA + dimethylallyl diphosphate = N(6)-dimethylallyladenosine(37) in tRNA + diphosphate. Catalyzes the transfer of a dimethylallyl group onto the adenine at position 37 in tRNAs that read codons beginning with uridine, leading to the formation of N6-(dimethylallyl)adenosine (i(6)A). This chain is tRNA dimethylallyltransferase, found in Rhizobium radiobacter (Agrobacterium tumefaciens).